The primary structure comprises 663 residues: 72 kDa type IV collagenase (663 aa).

A signal peptide spans 1-26; sequence MKTHSVFGFFFKVLLIQVYLFNKTLA. Residues 27-106 constitute a propeptide, activation peptide; the sequence is APSPIIKFPG…PRCGNPDVAN (80 aa). Residues 97–104 carry the Cysteine switch motif; it reads PRCGNPDV. Cys-99 contributes to the Zn(2+) binding site. Positions 107–218 are collagenase-like 1; it reads YNFFPRKPKW…LWTLGEGQVV (112 aa). Ca(2+) is bound by residues Asp-131 and Asp-165. Zn(2+) is bound by residues His-175 and Asp-177. 2 residues coordinate Ca(2+): Asp-182 and Gly-183. His-190 contributes to the Zn(2+) binding site. Ca(2+) is bound by residues Gly-197, Gly-199, and Asp-201. His-203 lines the Zn(2+) pocket. Residues Asp-205, Asp-206, and Glu-208 each coordinate Ca(2+). Residues 219–393 are collagen-binding; sequence RVKYGNADGE…WGFCPDQGYS (175 aa). Fibronectin type-II domains lie at 225 to 273, 283 to 331, and 341 to 389; these read ADGE…FCPH, GDGQ…FCPE, and SEGA…FCPD. Intrachain disulfides connect Cys-230–Cys-256, Cys-244–Cys-271, Cys-288–Cys-314, Cys-302–Cys-329, Cys-346–Cys-372, and Cys-360–Cys-387. The segment at 394–468 is collagenase-like 2; it reads LFLVAAHEFG…GPRPTLGPVT (75 aa). Residue His-400 participates in Zn(2+) binding. Glu-401 is a catalytic residue. Zn(2+) is bound by residues His-404 and His-410. Residues 445-464 are disordered; it reads SPDVEPGPGPGPGPGPRPTL. Residues 449–463 show a composition bias toward pro residues; it reads EPGPGPGPGPGPRPT. Cys-472 and Cys-663 are joined by a disulfide. 4 Hemopexin repeats span residues 475–519, 520–566, 568–616, and 617–663; these read DIVF…WPDL, PEKI…GLPP, VQRI…WNGV, and PDNL…WLGC. Ca(2+) contacts are provided by Asp-479, Asp-524, Asp-572, and Asp-621.

It belongs to the peptidase M10A family. As to quaternary structure, ligand for integrin alpha-V/beta-3. It depends on Ca(2+) as a cofactor. Zn(2+) serves as cofactor. The propeptide is processed by MMP14 (MT-MMP1) and MMP16 (MT-MMP3). In terms of tissue distribution, produced by normal skin fibroblasts.

The protein resides in the secreted. The protein localises to the extracellular space. It is found in the extracellular matrix. The enzyme catalyses Cleavage of gelatin type I and collagen types IV, V, VII, X. Cleaves the collagen-like sequence Pro-Gln-Gly-|-Ile-Ala-Gly-Gln.. The sequence is that of 72 kDa type IV collagenase (MMP2) from Gallus gallus (Chicken).